Consider the following 428-residue polypeptide: Ribosomal RNA small subunit methyltransferase B (428 aa).

S-adenosyl-L-methionine contacts are provided by residues C253 to K259, D276, D302, and D321. C374 functions as the Nucleophile in the catalytic mechanism.

The protein belongs to the class I-like SAM-binding methyltransferase superfamily. RsmB/NOP family.

Its subcellular location is the cytoplasm. The enzyme catalyses cytidine(967) in 16S rRNA + S-adenosyl-L-methionine = 5-methylcytidine(967) in 16S rRNA + S-adenosyl-L-homocysteine + H(+). Specifically methylates the cytosine at position 967 (m5C967) of 16S rRNA. This Citrobacter koseri (strain ATCC BAA-895 / CDC 4225-83 / SGSC4696) protein is Ribosomal RNA small subunit methyltransferase B.